The sequence spans 312 residues: Pyridoxal kinase (312 aa).

The residue at position 1 (Met-1) is an N-acetylmethionine. Pyridoxal-binding residues include Ser-12 and Thr-47. Thr-47 is a pyridoxal 5'-phosphate binding site. Residue Ser-59 is modified to Phosphoserine. An ATP-binding site is contributed by Asp-113. Asp-113 serves as a coordination point for Na(+). Asp-118 contacts Mg(2+). A Na(+)-binding site is contributed by Thr-148. Position 150 to 153 (150 to 153 (NQFE)) interacts with ATP. Phosphoserine is present on Ser-164. A Na(+)-binding site is contributed by Thr-186. 186 to 187 (TS) provides a ligand contact to ATP. Ser-213 is modified (phosphoserine). Residues 226-228 (VDP) and Thr-233 each bind ATP. Residue 234 to 235 (GD) participates in pyridoxal 5'-phosphate binding. The active-site Proton acceptor is the Asp-235. At Ser-285 the chain carries Phosphoserine.

This sequence belongs to the pyridoxine kinase family. As to quaternary structure, homodimer. The cofactor is Zn(2+). Requires Mg(2+) as cofactor.

The protein resides in the cytoplasm. The protein localises to the cytosol. The enzyme catalyses pyridoxal + ATP = pyridoxal 5'-phosphate + ADP + H(+). The catalysed reaction is pyridoxamine + ATP = pyridoxamine 5'-phosphate + ADP + H(+). It catalyses the reaction pyridoxine + ATP = pyridoxine 5'-phosphate + ADP + H(+). The protein operates within cofactor metabolism; pyridoxal 5'-phosphate salvage; pyridoxal 5'-phosphate from pyridoxal: step 1/1. It participates in cofactor metabolism; pyridoxal 5'-phosphate salvage; pyridoxine 5'-phosphate from pyridoxine: step 1/1. It functions in the pathway cofactor metabolism; pyridoxal 5'-phosphate salvage; pyridoxamine 5'-phosphate from pyridoxamine: step 1/1. With respect to regulation, activity is increased in the presence of K(+)or Na(+). Functionally, catalyzes the phosphorylation of the dietary vitamin B6 vitamers pyridoxal (PL), pyridoxine (PN) and pyridoxamine (PM) to form pyridoxal 5'-phosphate (PLP), pyridoxine 5'-phosphate (PNP) and pyridoxamine 5'-phosphate (PMP), respectively. PLP is the active form of vitamin B6, and acts as a cofactor for over 140 different enzymatic reactions. This Rattus norvegicus (Rat) protein is Pyridoxal kinase (Pdxk).